The sequence spans 503 residues: Plant-specific TFIIB-related protein 1 (503 aa).

Residues 1-33 (MKCPYCSSAQGRCTTTSSGRSITECSSCGRVME) form a TFIIB-type zinc finger. Disordered regions lie at residues 328–366 (PEKA…AKPI), 411–431 (NAMD…LGDK), 436–455 (IYLR…TGIS), and 468–503 (GSSS…HGDF). A compositionally biased stretch (low complexity) spans 333–346 (PTTTISTTRSTTPR). Residues 355 to 366 (FVEKDKPSAKPI) are compositionally biased toward basic and acidic residues.

Ubiquinated. Subsequent degradation by the proteasome pathway. Widely expressed.

The protein resides in the plastid. Its subcellular location is the chloroplast outer membrane. It is found in the nucleus. Its function is as follows. Plant-specific TFIIB-related protein that may be involved in an intracellular signaling pathway between plastids and the nucleus. May act as general transcription factor (GTF) of RNA polymerase I-dependent transcription and rRNA synthesis. Forms a ternary complex with TBP2 and the rDNA promoter region. This is Plant-specific TFIIB-related protein 1 from Arabidopsis thaliana (Mouse-ear cress).